The following is a 373-amino-acid chain: Melanoma-associated antigen C2 (373 aa).

The tract at residues 1–102 (MPPVPGVPFR…QGPSQSPLSS (102 aa)) is disordered. Low complexity predominate over residues 40–60 (SSASSTLYLVFSPSSFSTSSS). Positions 85-94 (SSPPQGPPQG) are enriched in pro residues. The tract at residues 135–373 (SSFTYTLDEK…VMSSNVSFSE (239 aa)) is interaction with TRIM28. Residues 141–336 (LDEKVAELVE…SSFPSWYKDA (196 aa)) form the MAGE domain.

Interacts with TRIM28 and UBE2H. As to expression, not expressed in normal tissues, except in germ cells in the seminiferous tubules and in Purkinje cells of the cerebellum. Expressed in various tumors, including melanoma, lymphoma, as well as pancreatic cancer, mammary gland cancer, non-small cell lung cancer and liver cancer. In hepatocellular carcinoma, there is an inverse correlation between tumor differentiation and protein expression, i.e. the lower the differentiation, the higher percentage of expression.

It is found in the cytoplasm. Its subcellular location is the nucleus. Proposed to enhance ubiquitin ligase activity of RING-type zinc finger-containing E3 ubiquitin-protein ligases. In vitro enhances ubiquitin ligase activity of TRIM28 and stimulates p53/TP53 ubiquitination in presence of Ubl-conjugating enzyme UBE2H leading to p53/TP53 degradation. Proposed to act through recruitment and/or stabilization of the Ubl-conjugating enzymes (E2) at the E3:substrate complex. The sequence is that of Melanoma-associated antigen C2 (MAGEC2) from Homo sapiens (Human).